The following is a 312-amino-acid chain: Methionyl-tRNA formyltransferase (312 aa).

A (6S)-5,6,7,8-tetrahydrofolate-binding site is contributed by serine 111–proline 114.

The protein belongs to the Fmt family.

It catalyses the reaction L-methionyl-tRNA(fMet) + (6R)-10-formyltetrahydrofolate = N-formyl-L-methionyl-tRNA(fMet) + (6S)-5,6,7,8-tetrahydrofolate + H(+). Functionally, attaches a formyl group to the free amino group of methionyl-tRNA(fMet). The formyl group appears to play a dual role in the initiator identity of N-formylmethionyl-tRNA by promoting its recognition by IF2 and preventing the misappropriation of this tRNA by the elongation apparatus. This is Methionyl-tRNA formyltransferase from Myxococcus xanthus (strain DK1622).